Consider the following 195-residue polypeptide: Probable GTP-binding protein EngB (195 aa).

An EngB-type G domain is found at 24–195; the sequence is GLKEVALAGR…MIFNAIEKYL (172 aa). Residues 32–39, 59–63, 77–80, 144–147, and 176–178 contribute to the GTP site; these read GRSNVGKS, GKTQT, DVPG, TKED, and YTA. Mg(2+)-binding residues include Ser-39 and Thr-61.

Belongs to the TRAFAC class TrmE-Era-EngA-EngB-Septin-like GTPase superfamily. EngB GTPase family. Mg(2+) is required as a cofactor.

Its function is as follows. Necessary for normal cell division and for the maintenance of normal septation. This is Probable GTP-binding protein EngB from Macrococcus caseolyticus (strain JCSC5402) (Macrococcoides caseolyticum).